A 239-amino-acid polypeptide reads, in one-letter code: Probable 2-phosphosulfolactate phosphatase (239 aa).

It belongs to the ComB family. Mg(2+) serves as cofactor.

It carries out the reaction (2R)-O-phospho-3-sulfolactate + H2O = (2R)-3-sulfolactate + phosphate. The polypeptide is Probable 2-phosphosulfolactate phosphatase (Clostridium botulinum (strain Kyoto / Type A2)).